Here is a 138-residue protein sequence, read N- to C-terminus: Putative protein encoded by LINC02912 (138 aa).

Helical transmembrane passes span 32 to 52 (FALSFLIGKMGIIILSVCLIC) and 65 to 85 (CLINVSFSLYSCFIVFVTISQ). Residues 109-138 (SGGQSQHSWPCPERSKNLPQVSKQLRNRAG) are disordered.

Its subcellular location is the membrane. The protein is Putative protein encoded by LINC02912 of Homo sapiens (Human).